We begin with the raw amino-acid sequence, 89 residues long: MVLLAENKDEMIANFKLHDSDTGSPEVQVALLTHRISYLTEHVKVHKKDHHSRRGLLILVGRRRSLLDYLRKKDIERYRSLIERLGLRR.

Belongs to the universal ribosomal protein uS15 family. As to quaternary structure, part of the 30S ribosomal subunit. Forms a bridge to the 50S subunit in the 70S ribosome, contacting the 23S rRNA.

Its function is as follows. One of the primary rRNA binding proteins, it binds directly to 16S rRNA where it helps nucleate assembly of the platform of the 30S subunit by binding and bridging several RNA helices of the 16S rRNA. Functionally, forms an intersubunit bridge (bridge B4) with the 23S rRNA of the 50S subunit in the ribosome. This Desulforapulum autotrophicum (strain ATCC 43914 / DSM 3382 / VKM B-1955 / HRM2) (Desulfobacterium autotrophicum) protein is Small ribosomal subunit protein uS15.